The sequence spans 515 residues: MPLSWLLPFSAMELLLTATIFYLVLWVVKAFRLQVPKGLKSPPGPWGWPLIGHVLTLGKNPHLALTRLSARYGDVLQIRIGSTPVVVLSGLDTIRQALVRQSDDFKGRPDLYSSTFISDGQSMIFNPDSGPVWAARRRLAQSALQSFSVASDPASVSSCYLEEHVSREAEHLVTKLLDLMAGPGCFEPSSQIVGSVANVIGAMCFGKNFPQTSEEMLQIVNTSKEFTEFASSGNPVDFFPILRYLPNPMLQQFKDFNKRFLQFLQKTVQEHYQDFDKNHVQDIASALFKHSEESPHVNGDLIPRKKIVNLVNDIFGAGFDTVTTAISWSLLYLVTKPEIQKKIHKELDAVIGRDRKPRLADRPQLPYMEAFILEVFRYSSFLPFTIPHCTTRDTILNGFYIPKDRCVFINQWQVNHDPKQWEDPFEFRPERFLLANNTAVDKTLSDKILLFGLGKRRCIGETLGRWEVFLFLAILLQQLEFSVPPGVKVDLTPVYGLTMKPPHCQHVQARPRFSK.

Ser69 is a glycosylation site (O-linked (GlcNAc) serine). Phe226 serves as a coordination point for substrate. A heme-binding site is contributed by Cys458.

This sequence belongs to the cytochrome P450 family. In terms of assembly, interacts with PGRMC1; the interaction requires PGRMC1 homodimerization. Requires heme as cofactor.

The protein localises to the endoplasmic reticulum membrane. The protein resides in the microsome membrane. The catalysed reaction is an organic molecule + reduced [NADPH--hemoprotein reductase] + O2 = an alcohol + oxidized [NADPH--hemoprotein reductase] + H2O + H(+). The enzyme catalyses 17beta-estradiol + reduced [NADPH--hemoprotein reductase] + O2 = 2-hydroxy-17beta-estradiol + oxidized [NADPH--hemoprotein reductase] + H2O + H(+). It carries out the reaction 17beta-estradiol + reduced [NADPH--hemoprotein reductase] + O2 = 4-hydroxy-17beta-estradiol + oxidized [NADPH--hemoprotein reductase] + H2O + H(+). It catalyses the reaction estrone + reduced [NADPH--hemoprotein reductase] + O2 = 2-hydroxyestrone + oxidized [NADPH--hemoprotein reductase] + H2O + H(+). The catalysed reaction is estrone + reduced [NADPH--hemoprotein reductase] + O2 = 4-hydroxyestrone + oxidized [NADPH--hemoprotein reductase] + H2O + H(+). The enzyme catalyses cholesterol + reduced [NADPH--hemoprotein reductase] + O2 = 25-hydroxycholesterol + oxidized [NADPH--hemoprotein reductase] + H2O + H(+). It carries out the reaction all-trans-retinol + reduced [NADPH--hemoprotein reductase] + O2 = all-trans-retinal + oxidized [NADPH--hemoprotein reductase] + 2 H2O + H(+). It catalyses the reaction all-trans-retinal + reduced [NADPH--hemoprotein reductase] + O2 = all-trans-retinoate + oxidized [NADPH--hemoprotein reductase] + H2O + 2 H(+). The catalysed reaction is (5Z,8Z,11Z,14Z)-eicosatetraenoate + reduced [NADPH--hemoprotein reductase] + O2 = (14R,15S)-epoxy-(5Z,8Z,11Z)-eicosatrienoate + oxidized [NADPH--hemoprotein reductase] + H2O + H(+). The enzyme catalyses (5Z,8Z,11Z,14Z)-eicosatetraenoate + reduced [NADPH--hemoprotein reductase] + O2 = (14S,15R)-epoxy-(5Z,8Z,11Z)-eicosatrienoate + oxidized [NADPH--hemoprotein reductase] + H2O + H(+). It carries out the reaction (5Z,8Z,11Z,14Z,17Z)-eicosapentaenoate + reduced [NADPH--hemoprotein reductase] + O2 = (17R,18S)-epoxy-(5Z,8Z,11Z,14Z)-eicosatetraenoate + oxidized [NADPH--hemoprotein reductase] + H2O + H(+). It catalyses the reaction (4Z,7Z,10Z,13Z,16Z,19Z)-docosahexaenoate + reduced [NADPH--hemoprotein reductase] + O2 = (19R,20S)-epoxy-(4Z,7Z,10Z,13Z,16Z)-docosapentaenoate + oxidized [NADPH--hemoprotein reductase] + H2O + H(+). The catalysed reaction is (5S)-hydroperoxy-(6E,8Z,11Z,14Z)-eicosatetraenoate = 5-oxo-(6E,8Z,11Z,14Z)-eicosatetraenoate + H2O. The enzyme catalyses (12S)-hydroperoxy-(5Z,8Z,10E,14Z)-eicosatetraenoate = 12-oxo-(5Z,8Z,10E,14Z)-eicosatetraenoate + H2O. It carries out the reaction (15S)-hydroperoxy-(5Z,8Z,11Z,13E)-eicosatetraenoate = 15-oxo-(5Z,8Z,11Z,13E)-eicosatetraenoate + H2O. It catalyses the reaction (13S)-hydroperoxy-(9Z,11E)-octadecadienoate = 13-oxo-(9Z,11E)-octadecadienoate + H2O. The catalysed reaction is (5Z,8Z,11Z,14Z)-eicosatetraenoate + reduced [NADPH--hemoprotein reductase] + O2 = 13-hydroxy-(5Z,8Z,11Z,14Z)-eicosatetraenoate + oxidized [NADPH--hemoprotein reductase] + H2O + H(+). The enzyme catalyses (5Z,8Z,11Z,14Z)-eicosatetraenoate + reduced [NADPH--hemoprotein reductase] + O2 = 19-hydroxy-(5Z,8Z,11Z,14Z)-eicosatetraenoate + oxidized [NADPH--hemoprotein reductase] + H2O + H(+). It carries out the reaction (9Z,12Z)-octadecadienoate + reduced [NADPH--hemoprotein reductase] + O2 = 11-hydroxy-(9Z,12Z)-octadecadienoate + oxidized [NADPH--hemoprotein reductase] + H2O + H(+). The protein operates within cofactor metabolism; retinol metabolism. It functions in the pathway steroid metabolism; cholesterol metabolism. It participates in lipid metabolism; arachidonate metabolism. Functionally, a cytochrome P450 monooxygenase involved in the metabolism of various endogenous substrates, including fatty acids, steroid hormones and vitamins. Mechanistically, uses molecular oxygen inserting one oxygen atom into a substrate, and reducing the second into a water molecule, with two electrons provided by NADPH via cytochrome P450 reductase (NADPH--hemoprotein reductase). Catalyzes the hydroxylation of carbon-hydrogen bonds. Exhibits high catalytic activity for the formation of hydroxyestrogens from estrone (E1) and 17beta-estradiol (E2), namely 2-hydroxy E1 and E2. Metabolizes cholesterol toward 25-hydroxycholesterol, a physiological regulator of cellular cholesterol homeostasis. May act as a major enzyme for all-trans retinoic acid biosynthesis in the liver. Catalyzes two successive oxidative transformation of all-trans retinol to all-trans retinal and then to the active form all-trans retinoic acid. Primarily catalyzes stereoselective epoxidation of the last double bond of polyunsaturated fatty acids (PUFA), displaying a strong preference for the (R,S) stereoisomer. Catalyzes bisallylic hydroxylation and omega-1 hydroxylation of PUFA. May also participate in eicosanoids metabolism by converting hydroperoxide species into oxo metabolites (lipoxygenase-like reaction, NADPH-independent). Plays a role in the oxidative metabolism of xenobiotics. Catalyzes the N-hydroxylation of heterocyclic amines and the O-deethylation of phenacetin. Metabolizes caffeine via N3-demethylation. This Cavia porcellus (Guinea pig) protein is Cytochrome P450 1A2 (CYP1A2).